A 557-amino-acid chain; its full sequence is E3 ubiquitin-protein ligase rnf168 (557 aa).

The RING-type zinc finger occupies 16–55 (CPICQEILLEPVTLPCKHTLCNPCFQMTVEKASLCCPFCR). The LR motif 1 signature appears at 112-130 (LCQPGEIRQEYEAEVSKIE). The short motif at 145–153 (EDYIQKLLA) is the UMI motif element. 2 consecutive short sequence motifs (MIU motif) follow at residues 170-193 (MEEQ…VSNA) and 422-445 (RRRQ…KELK). The short motif at 449-460 (RGKGSPDEYELR) is the LR motif 2 element. Residues 482–543 (PLRKEIPVQD…GINVLKPINK (62 aa)) form a disordered region. Over residues 490–500 (QDNSRNTQSEY) the composition is skewed to polar residues. Residues 508-521 (PSRKNSVRSARVRQ) show a composition bias toward basic residues.

It belongs to the RNF168 family. In terms of assembly, monomer.

Its subcellular location is the nucleus. It catalyses the reaction S-ubiquitinyl-[E2 ubiquitin-conjugating enzyme]-L-cysteine + [acceptor protein]-L-lysine = [E2 ubiquitin-conjugating enzyme]-L-cysteine + N(6)-ubiquitinyl-[acceptor protein]-L-lysine.. It participates in protein modification; protein ubiquitination. Its function is as follows. E3 ubiquitin-protein ligase required for accumulation of repair proteins to sites of DNA damage. Acts with ube2n/ubc13 to amplify the rnf8-dependent histone ubiquitination. Recruited to sites of DNA damage at double-strand breaks (DSBs) by binding to ubiquitinated histone H2A and ubiquitinates histone H2A and H2AX, leading to amplify the rnf8-dependent H2A ubiquitination and promoting the formation of 'Lys-63'-linked ubiquitin conjugates. This leads to concentrate ubiquitinated histones H2A and H2AX at DNA lesions to the threshold required for recruitment of tp53bp1 and brca1. Catalyzes monoubiquitination of 'Lys-13' and 'Lys-15' of nucleosomal histone H2A (H2AK13Ub and H2AK15Ub, respectively). In Xenopus laevis (African clawed frog), this protein is E3 ubiquitin-protein ligase rnf168.